The chain runs to 194 residues: MSEIKLIVGLGNPGDKYADTRHNAGEWLIERLARRFNFNLSVESKFSGKTARAVISGQEMRFLVPTTFMNLSGKAVSALANFYRIPPEQILVLHDELDFSPGIAKIKQGGGHGGHNGLKDIIAQLANNKNFYRLRIGIGHPGDKNLVASYVLNKPSPTDRQLIDRSLEEATDCIEILMKEGITKATNRLNAFKA.

A tRNA-binding site is contributed by Tyr-17. The active-site Proton acceptor is the His-22. The tRNA site is built by Phe-68, Asn-70, and Asn-116.

The protein belongs to the PTH family. As to quaternary structure, monomer.

Its subcellular location is the cytoplasm. It carries out the reaction an N-acyl-L-alpha-aminoacyl-tRNA + H2O = an N-acyl-L-amino acid + a tRNA + H(+). In terms of biological role, hydrolyzes ribosome-free peptidyl-tRNAs (with 1 or more amino acids incorporated), which drop off the ribosome during protein synthesis, or as a result of ribosome stalling. Functionally, catalyzes the release of premature peptidyl moieties from peptidyl-tRNA molecules trapped in stalled 50S ribosomal subunits, and thus maintains levels of free tRNAs and 50S ribosomes. In Histophilus somni (strain 129Pt) (Haemophilus somnus), this protein is Peptidyl-tRNA hydrolase.